The following is a 547-amino-acid chain: MFS-type transporter M6 (547 aa).

A disordered region spans residues 1–45 (MHRRRRDNLMTPAEMVASMKPPQSLSTEDDDGSRRDSESSADVLK). The chain crosses the membrane as a helical span at residues 81–101 (VLVVASFAAAISPFSTSTYYP). N-linked (GlcNAc...) asparagine glycosylation occurs at N118. A helical membrane pass occupies residues 146–166 (PMFLVCFAIYFVANVGLALQN). An N-linked (GlcNAc...) asparagine glycan is attached at N167. 2 helical membrane passes run 206–226 (LIYA…IGGL) and 236–256 (VFWF…IFFG). N274 carries N-linked (GlcNAc...) asparagine glycosylation. Helical transmembrane passes span 317–337 (FILS…TSVL), 347–367 (YDAV…LLAY), 407–427 (LGFV…YGWQ), 432–452 (APLA…TGVM), and 469–489 (AVGA…VAVV). N493 carries N-linked (GlcNAc...) asparagine glycosylation. The helical transmembrane segment at 496 to 516 (AGIGWTATVTAGLWVLMMPTL) threads the bilayer.

The protein belongs to the major facilitator superfamily. CAR1 family.

The protein resides in the membrane. Functionally, MFS-type transporter; part of the gene cluster that mediates the biosynthesis of squalestatin S1 (SQS1, also known as zaragozic acid A), a heavily oxidized fungal polyketide that offers potent cholesterol lowering activity by targeting squalene synthase (SS). The chain is MFS-type transporter M6 from Phoma sp. (strain ATCC 20986 / MF5453).